Reading from the N-terminus, the 340-residue chain is Alcohol dehydrogenase patD (340 aa).

A Zn(2+)-binding site is contributed by cysteine 46. Histidine 47 is an NAD(+) binding site. Residues histidine 67, glutamate 68, cysteine 101, cysteine 104, cysteine 112, and cysteine 154 each coordinate Zn(2+). A substrate-binding site is contributed by histidine 67. Residues 178-183 (GLGGLG), 198-203 (VALSRD), lysine 206, 265-267 (LSI), 289-291 (PSG), and 297-299 (EDA) each bind NAD(+).

This sequence belongs to the zinc-containing alcohol dehydrogenase family. Requires Zn(2+) as cofactor.

Its subcellular location is the cytoplasm. The protein resides in the cytosol. The catalysed reaction is neopatulin + NADPH + H(+) = (E)-ascladiol + NADP(+). It functions in the pathway mycotoxin biosynthesis; patulin biosynthesis. Alcohol dehydrogenase; part of the gene cluster that mediates the biosynthesis of patulin, an acetate-derived tetraketide mycotoxin produced by several fungal species that shows antimicrobial properties against several bacteria. PatD catalyzes the conversion of neopatulin into E-ascladiol. The pathway begins with the synthesis of 6-methylsalicylic acid by the polyketide synthase (PKS) patK via condensation of acetate and malonate units. The 6-methylsalicylic acid decarboxylase patG then catalyzes the decarboxylation of 6-methylsalicylic acid to yield m-cresol (also known as 3-methylphenol). These first reactions occur in the cytosol. The intermediate m-cresol is then transported into the endoplasmic reticulum where the cytochrome P450 monooxygenase patH converts it to m-hydroxybenzyl alcohol, which is further converted to gentisyl alcohol by the cytochrome P450 monooxygenase patI. The oxidoreductases patJ and patO further convert gentisyl alcohol to isoepoxydon in the vacuole. PatN catalyzes then the transformation of isoepoxydon into phyllostine. The cluster protein patF is responsible for the conversion from phyllostine to neopatulin whereas the alcohol dehydrogenase patD converts neopatulin to E-ascladiol. The steps between isoepoxydon and E-ascladiol occur in the cytosol, and E-ascladiol is probably secreted to the extracellular space by one of the cluster-specific transporters patC or patM. Finally, the secreted patulin synthase patE catalyzes the conversion of E-ascladiol to patulin. In Penicillium expansum (Blue mold rot fungus), this protein is Alcohol dehydrogenase patD.